A 322-amino-acid polypeptide reads, in one-letter code: Trans-acting factor B (322 aa).

The disordered stretch occupies residues Asp-35 to Glu-188. Polar residues-rich tracts occupy residues Gln-72–Arg-97 and Gln-110–Ala-166. A compositionally biased stretch (basic and acidic residues) spans Ala-167 to Glu-178.

Plasmid partition require REP1, REP2, and a cis-acting DNA sequence (known as STB). REP1 may act by intercalating in the yeast nuclear matrix and binding STB either directly or via REP2. This chain is Trans-acting factor B (B), found in Zygosaccharomyces bisporus.